The primary structure comprises 228 residues: Large ribosomal subunit protein uL1 (228 aa).

The protein belongs to the universal ribosomal protein uL1 family. In terms of assembly, part of the 50S ribosomal subunit.

Its function is as follows. Binds directly to 23S rRNA. The L1 stalk is quite mobile in the ribosome, and is involved in E site tRNA release. In terms of biological role, protein L1 is also a translational repressor protein, it controls the translation of the L11 operon by binding to its mRNA. This Clavibacter sepedonicus (Clavibacter michiganensis subsp. sepedonicus) protein is Large ribosomal subunit protein uL1.